The following is a 355-amino-acid chain: Mitogen-activated protein kinase (355 aa).

The region spanning 23 to 311 is the Protein kinase domain; sequence YDIQDVVGEG…VEEALKHPYL (289 aa). Residues 29 to 37 and K52 each bind ATP; that span reads VGEGAYGVV. The active-site Proton acceptor is the D147. Position 183 is a phosphothreonine (T183). The TXY motif lies at 183–185; that stretch reads TEY. A Phosphotyrosine modification is found at Y185.

This sequence belongs to the protein kinase superfamily. CMGC Ser/Thr protein kinase family. MAP kinase subfamily. Dually phosphorylated on Thr-183 and Tyr-185, which activates the enzyme.

The protein localises to the nucleus. The catalysed reaction is L-seryl-[protein] + ATP = O-phospho-L-seryl-[protein] + ADP + H(+). It catalyses the reaction L-threonyl-[protein] + ATP = O-phospho-L-threonyl-[protein] + ADP + H(+). With respect to regulation, activated by tyrosine and threonine phosphorylation. Functionally, responds to activation by environmental stress by phosphorylating downstream targets. The sequence is that of Mitogen-activated protein kinase (MAPK) from Fusarium vanettenii (Neocosmospora pisi).